A 116-amino-acid chain; its full sequence is MQNIIKSIEEEYYKKDLPRFGPGDTVKVHVKVVEGTRERLQVFEGTVIKIRGTGLSQTFTVRRTTSGVGVERTFPLHSPKIARIEVTRRGKVRRGRLYYLRQLTGKKARVKEKGRY.

This sequence belongs to the bacterial ribosomal protein bL19 family.

In terms of biological role, this protein is located at the 30S-50S ribosomal subunit interface and may play a role in the structure and function of the aminoacyl-tRNA binding site. This Syntrophomonas wolfei subsp. wolfei (strain DSM 2245B / Goettingen) protein is Large ribosomal subunit protein bL19.